The chain runs to 509 residues: Coiled-coil domain-containing protein 181 (509 aa).

Positions 60–82 are enriched in basic and acidic residues; the sequence is EHTKQHSDPDKSLQDDVSPRRND. Disordered regions lie at residues 60–121 and 285–367; these read EHTK…EEDE and GEPL…EEKE. A compositionally biased stretch (polar residues) spans 320–334; the sequence is RTQSARISPVTSTYC. A coiled-coil region spans residues 335–375; that stretch reads LSPRQKELQKQLEQKREKLKREEEQRKIEEEKEKKRENDIV. Over residues 338–367 the composition is skewed to basic and acidic residues; it reads RQKELQKQLEQKREKLKREEEQRKIEEEKE.

Belongs to the CCDC181 family. Homodimer. Interacts with HOOK1. Interacts with HOOK2. Interacts with HOOK3.

The protein localises to the cytoplasm. The protein resides in the cytoskeleton. Its subcellular location is the cell projection. It localises to the cilium. It is found in the flagellum. Microtubule-binding protein that localizes to the microtubular manchette of elongating spermatids. The sequence is that of Coiled-coil domain-containing protein 181 from Macaca fascicularis (Crab-eating macaque).